Consider the following 34-residue polypeptide: SCADAYKSCDSLKCCNNRTCMCSMIGTNCTCRKK.

4 cysteine pairs are disulfide-bonded: C2–C15, C9–C20, C14–C31, and C22–C29.

In terms of tissue distribution, expressed by the venom gland.

It localises to the secreted. Its function is as follows. Non-toxic to mice and insects. This chain is U10-ctenitoxin-Pr1a, found in Phoneutria reidyi (Brazilian Amazonian armed spider).